The chain runs to 485 residues: Glutamyl-tRNA(Gln) amidotransferase subunit A (485 aa).

Active-site charge relay system residues include Lys-79 and Ser-154. Residue Ser-178 is the Acyl-ester intermediate of the active site.

It belongs to the amidase family. GatA subfamily. Heterotrimer of A, B and C subunits.

It carries out the reaction L-glutamyl-tRNA(Gln) + L-glutamine + ATP + H2O = L-glutaminyl-tRNA(Gln) + L-glutamate + ADP + phosphate + H(+). In terms of biological role, allows the formation of correctly charged Gln-tRNA(Gln) through the transamidation of misacylated Glu-tRNA(Gln) in organisms which lack glutaminyl-tRNA synthetase. The reaction takes place in the presence of glutamine and ATP through an activated gamma-phospho-Glu-tRNA(Gln). This chain is Glutamyl-tRNA(Gln) amidotransferase subunit A, found in Desulforamulus reducens (strain ATCC BAA-1160 / DSM 100696 / MI-1) (Desulfotomaculum reducens).